Here is a 373-residue protein sequence, read N- to C-terminus: GTP cyclohydrolase 1 type 2 homolog (373 aa).

A divalent metal cation-binding residues include histidine 67, histidine 68, aspartate 106, histidine 333, and glutamate 336.

It belongs to the GTP cyclohydrolase I type 2/NIF3 family. Homohexamer.

The protein is GTP cyclohydrolase 1 type 2 homolog of Listeria monocytogenes serovar 1/2a (strain ATCC BAA-679 / EGD-e).